Here is a 624-residue protein sequence, read N- to C-terminus: RQC trigger complex subunit CUE3 (624 aa).

One can recognise a CUE domain in the interval 316-359 (VNEEQLSALMELFPQFSKYQLSQTLLAYDNNIELVTNKIFEDPT). Disordered stretches follow at residues 366–390 (REPA…ELSI), 435–469 (RDDT…DDSN), and 546–624 (SKTG…NNAI). Phosphoserine is present on Ser377. Basic and acidic residues-rich tracts occupy residues 443–455 (DVNR…RIGL) and 568–589 (EQAK…TEQK). The span at 590–617 (KRQHAKNEKRKGARANHNRKKGHDKKLA) shows a compositional bias: basic residues.

As to quaternary structure, component of the RQT (ribosome quality control trigger) complex, composed of SLH1, CUE3, and RQT4. Interacts with ubiquitin; the interaction is direct. Interacts with SLH1. Interacts with RQT4. Interacts with HEL2. Associates with translating ribosomes.

The protein resides in the cytoplasm. In terms of biological role, involved in activation of the ribosome quality control (RQC) pathway, a pathway that degrades nascent peptide chains during problematic translation. Specifically recognizes and binds RPS20/uS10 ubiquitinated by HEL2, promoting recruitment of the RQT (ribosome quality control trigger) complex on stalled ribosomes, followed by disassembly of stalled ribosomes. The polypeptide is RQC trigger complex subunit CUE3 (CUE3) (Saccharomyces cerevisiae (strain ATCC 204508 / S288c) (Baker's yeast)).